The chain runs to 447 residues: Mannose/glucose-specific lectin (447 aa).

Tandem repeats lie at residues 1–149, 150–295, and 296–447. Residues 1–447 are 3 X approximate tandem repeats; sequence SLKGMISVGP…GIFVKPDTAV (447 aa). Jacalin-type lectin domains follow at residues 5–148, 153–294, and 300–443; these read MISV…FVQP, TISF…YVKP, and SISI…FVKP.

Belongs to the jacalin lectin family. In terms of assembly, homodimer. In terms of processing, the N-terminus is blocked.

In terms of biological role, mannose/glucose specific lectin. Shows agglutinating activity against rabbit erythrocytes. This chain is Mannose/glucose-specific lectin, found in Parkia platycephala.